The primary structure comprises 210 residues: DNA-directed RNA polymerases I, II, and III subunit RPABC1 (210 aa).

Methionine 1 carries the N-acetylmethionine modification. Lysine 81 participates in a covalent cross-link: Glycyl lysine isopeptide (Lys-Gly) (interchain with G-Cter in SUMO2).

Belongs to the archaeal Rpo5/eukaryotic RPB5 RNA polymerase subunit family. As to quaternary structure, component of the RNA polymerase I (Pol I), RNA polymerase II (Pol II) and RNA polymerase III (Pol III) complexes consisting of at least 13, 12 and 17 subunits, respectively. Pol I complex consists of a ten-subunit catalytic core composed of POLR1A/RPA1, POLR1B/RPA2, POLR1C/RPAC1, POLR1D/RPAC2, POLR1H/RPA12, POLR2E/RPABC1, POLR2F/RPABC2, POLR2H/RPABC3, POLR2K/RPABC4 and POLR2L/RPABC5; a mobile stalk subunit POLR1F/RPA43 protruding from the core and additional subunits homologous to general transcription factors POLR1E/RPA49 and POLR1G/RPA34. Part of Pol I pre-initiation complex (PIC), in which Pol I core assembles with RRN3 and promoter-bound UTBF and SL1/TIF-IB complex. Pol II complex contains a ten-subunit catalytic core composed of POLR2A/RPB1, POLR2B/RPB2, POLR2C/RPB3, POLR2I/RPB9, POLR2J/RPB11, POLR2E/RPABC1, POLR2F/RPABC2, POLR2H/RPABC3, POLR2K/RPABC4 and POLR2L/RPABC5 and a mobile stalk composed of two subunits POLR2D/RPB4 and POLR2G/RPB7. Part of Pol II(G) complex, in which Pol II core associates with an additional subunit POLR2M; unlike conventional Pol II, Pol II(G) functions as a transcriptional repressor. Part of TBP-based Pol II pre-initiation complex (PIC), in which Pol II core assembles with general transcription factors and other specific initiation factors including GTF2E1, GTF2E2, GTF2F1, GTF2F2, TCEA1, ERCC2, ERCC3, GTF2H2, GTF2H3, GTF2H4, GTF2H5, GTF2A1, GTF2A2, GTF2B and TBP; this large multi-subunit PIC complex mediates DNA unwinding and targets Pol II core to the transcription start site where the first phosphodiester bond forms. In Pol II complex, this subunit is present in 2-fold molar excess over the other subunits. Pol III complex consists of a ten-subunit catalytic core composed of POLR3A/RPC1, POLR3B/RPC2, POLR1C/RPAC1, POLR1D/RPAC2, POLR3K/RPC10, POLR2E/RPABC1, POLR2F/RPABC2, POLR2H/RPABC3, POLR2K/RPABC4 and POLR2L/RPABC5; a mobile stalk composed of two subunits POLR3H/RPC8 and CRCP/RPC9, protruding from the core and functioning primarily in transcription initiation; and additional subunits homologous to general transcription factors of the RNA polymerase II machinery, POLR3C/RPC3-POLR3F/RPC6-POLR3G/RPC7 heterotrimer required for transcription initiation and POLR3D/RPC4-POLR3E/RPC5 heterodimer involved in both transcription initiation and termination. Component of the PAQosome complex which is responsible for the biogenesis of several protein complexes and which consists of R2TP complex members RUVBL1, RUVBL2, RPAP3 and PIH1D1, URI complex members PFDN2, PFDN6, PDRG1, UXT and URI1 as well as ASDURF, POLR2E and DNAAF10/WDR92. Interacts with URI1.

The protein localises to the nucleus. It is found in the nucleolus. In terms of biological role, DNA-dependent RNA polymerase catalyzes the transcription of DNA into RNA using the four ribonucleoside triphosphates as substrates. Common component of RNA polymerases I, II and III which synthesize ribosomal RNA precursors, mRNA precursors and many functional non-coding RNAs, and small RNAs, such as 5S rRNA and tRNAs, respectively. Pol II is the central component of the basal RNA polymerase II transcription machinery. Pols are composed of mobile elements that move relative to each other. In Pol II, POLR2E/RPABC1 is part of the lower jaw surrounding the central large cleft and thought to grab the incoming DNA template. Seems to be the major component in this process. The polypeptide is DNA-directed RNA polymerases I, II, and III subunit RPABC1 (Mus musculus (Mouse)).